Here is a 216-residue protein sequence, read N- to C-terminus: Large ribosomal subunit protein eL15 (216 aa).

Residues 170 to 188 are compositionally biased toward basic residues; that stretch reads RGLRKSKGFKGTVKHKWSR. Residues 170-201 are disordered; the sequence is RGLRKSKGFKGTVKHKWSRKQKEREEKKRHEA. Residues 189-201 show a composition bias toward basic and acidic residues; the sequence is KQKEREEKKRHEA.

The protein belongs to the eukaryotic ribosomal protein eL15 family.

The sequence is that of Large ribosomal subunit protein eL15 from Saccharolobus islandicus (strain M.16.27) (Sulfolobus islandicus).